The chain runs to 340 residues: MAERYISQRHWSQLPPEEQIRVWEDYEAGRATTFLVEPERKRTKRRRGEHSTKPKCENPTWYRPARYKALSGQLGHAYNRLVKKDPVTGEQSLRMHMSRHPFYVQKRTFAGRKYAFRPEKQRLLDAVWPVLVSFSDAGTHTVGMSVSRLAKEISPKDSKGKVIPELEVTVSRLSRLLAEQVRFGVLGMSEETMWDRETRQRLPRYVWITPAGWQMLGVDMVKLHEQQQKRLRESEIRQQLIREGVLREDEDISVHAARKRWYLQRSQDALKHRRAKAAARKRANLLKKLPADQQIYEMSQHILKRMPPDEAYWCTPERLQQLAIRELYQLELTLAAPPPH.

Residues 38–58 form a disordered region; sequence PERKRTKRRRGEHSTKPKCEN.

In Escherichia coli, this protein is Replication initiation protein (repA1).